The primary structure comprises 154 residues: Pro-corazonin (154 aa).

A signal peptide spans 1–19 (MLRLLLLPLFLFTLSMCMG). Glutamine 20 carries the pyrrolidone carboxylic acid modification. At asparagine 30 the chain carries Asparagine amide. Residues 70–154 (LERCLSQLQR…SAEPNVFGKH (85 aa)) constitute a propeptide that is removed on maturation.

Belongs to the corazonin family. As to expression, expression is restricted to 24 neurons in the larval CNS (8 in the brain and 16 in the ventral nerve cord) and 12-16 neurons in the pars lateralis of the adult brain.

It localises to the secreted. Functionally, cardioactive peptide. Corazonin is probably involved in the physiological regulation of the heart beat. Clock (Clk) and cycle (cyc) proteins negatively regulate Crz transcription in a cell-specific manner. This Drosophila erecta (Fruit fly) protein is Pro-corazonin (Crz).